A 1372-amino-acid polypeptide reads, in one-letter code: MGQLTKKFGKIDVSLPIPHLLNLQVDSYVKFLQEGATERRHDEGLEGVFRSVFPIEDFNRTASLEFVSYEVGEPKYDQPECISKGLTYEAPIRIKVRLVVYDVDEDSGNRTIRDIKEQEIYFGTLPLMTEKGTFIINGTERVIVNQLQRSPGIIFEHDSGKTHSSRKVLYSCRIIPMRGSWLDFDFDHKDILYVRIDRRRKMPATILFKAMGMSKTDILDYFYKKEFYRLDPMGRLMWEVQKDMYRKDSAFVDIEDGKGGTIVKAGKPITKRAWRLISEAGLETIEVAPDTIEGMFLAEDIVNPATGEVLAEAADEITASLVENLREAGISRLPVLHTKGLETSSSLRDTLVLDKTPDMEAAQVEIYRRLRPSSPPTPEIAASFFDNLFRSADYYDLSPVGRYKLNQRLGIDQSVDLRTLTDDDILRAIRVLLHLKDSHGPADDIDHLGNRRVRPVGELVENQYRIGLVRMERAIKERMSLQEVSTLMPHDLINPKPVAAVLKEFFGTSQLSQFMDQTNALSEVTHKRRLSALGPGGLTRERAGFEVRDVHTSHYGRICPIETPEGPNIGLIVSLTTYAKVNDFGFIETPYRIIREGALTDDIKFLDASREQGEVVAQANAAVDADGKLADEYVTARVRGDVLMSHRDEVTLMDISPSQMVSISAALIPFLEHDDANRALMGSNMQRQAVPLLRSEKPIVGTGMEGDVARDSGACILAEGPGIVRYADATRIIVSYENGLYPDRGGVRAYDLQKYHKSNQNSCFGQRPTCHPGQIVKKGDVLADGPGIEDGELALGKNLVVAFMPWCGYNFEDSILISERVVKEDVFTSIHIEEFEVVARDTKLGPEEITRDIPNVGEDMLRNLDGSGIIRIGASVKPDDILVGKITPKGETQLTPEEKLLRAIFGDKARDVKNTSLKVPPGIEGTIIDVKVFNRRSGEKDERTRNIEDYETARIDKKEQDHVRALGDALRDRLADTLVGKQIAVTLPGKRKGEVLAEAGAPMTRELLDALPVKRLAGLFKSREVDEMVDTALEDYDRQVAFLKGIYDSKREKVTEGDDLPPGVIKMVKVHIAVKRKLNVGDKMAGRHGNKGVVSCILPEEDMPFFADGRPVDIVLNPLGVPSRMNIGQIMETHLGWGAKELGRQLAEMLDSGAAMATLRHEVKDVFRSATIAKLVDEMDDETFRKAVSKLRTGIVTKTPVFDGASEEDIWSWIERAGMDGDGKTVLYDGRTGDKFYNRVTTGVMYILKLHHLVDEKIHARSTGPYSLVTQQPLGGKAQFGGQRLGEMEVWALEAYGASYLLQEFLTVKSDDVTGRVKMYEKIVKGDNFLEAGLPESFNVLVKELMSLGLNVTLHQEEGKKRPKRVGFMSAL.

Belongs to the RNA polymerase beta chain family. The RNAP catalytic core consists of 2 alpha, 1 beta, 1 beta' and 1 omega subunit. When a sigma factor is associated with the core the holoenzyme is formed, which can initiate transcription.

It catalyses the reaction RNA(n) + a ribonucleoside 5'-triphosphate = RNA(n+1) + diphosphate. DNA-dependent RNA polymerase catalyzes the transcription of DNA into RNA using the four ribonucleoside triphosphates as substrates. This Nitratidesulfovibrio vulgaris (strain DP4) (Desulfovibrio vulgaris) protein is DNA-directed RNA polymerase subunit beta.